A 140-amino-acid chain; its full sequence is Methylglyoxal synthase (140 aa).

Positions Met1 to Leu140 constitute an MGS-like domain. Substrate is bound by residues His8, Lys12, Thr34–Thr37, and Ser54–Gly55. The active-site Proton donor/acceptor is Asp60. Substrate is bound at residue His87.

It belongs to the methylglyoxal synthase family.

It catalyses the reaction dihydroxyacetone phosphate = methylglyoxal + phosphate. Functionally, catalyzes the formation of methylglyoxal from dihydroxyacetone phosphate. The protein is Methylglyoxal synthase of Geobacillus sp. (strain WCH70).